The sequence spans 519 residues: MAGQGSQKKKSCDWSKRYVDHLNGKMKCFHLQMSANFGHSMTIPNKFLDHFGGTLSRTIELVSPKGIVYIVKVTEHMNKTILQCGWEAFVDAHHIEENDSLLFRHIENSRFEVLILDSDGCEKVFTCAGIKKTSSVQERNAAPVDISRSTHDETTQSSGSKKFVRCQRASDSQRGKTAKLAETSSSGESGEEGTDSSTSEDESSYELDDPQMPPGRNYVLSRWTSLSEAQEEKVDMLVQDIQPEIPVFVAIMKHSNVNSRRACLVIPKRYASAHFPLESQTITLQRQGKNKKWYPMFYIRKDGSGYMLYGCWKNFVRDNHVKEGDMCIFHLTKFTGGEFGATVHLLRETKSGSLGSFHTSHKRFDLRDGRTWPKVTGVRRVSSRPYLTADRVSLTEEQVRKVEEVVHSIQSEGPMYVSIMNKSNVGTDGLYIIIFGRQFATRYLPEGEQTLTLLMTGKSNAWQVKMRPRSGDAQMITTGWRHFVHDNHLQIEDICLFQLMNDESKLTMTVHIIRRNEKS.

The TF-B3 1 DNA-binding region spans 26-119; that stretch reads MKCFHLQMSA…RFEVLILDSD (94 aa). Positions 138-218 are disordered; sequence ERNAAPVDIS…DPQMPPGRNY (81 aa). Residues 189–209 show a composition bias toward acidic residues; it reads SGEEGTDSSTSEDESSYELDD. 2 DNA-binding regions (TF-B3) span residues 249-349 and 416-516; these read VAIM…LRET and YVSI…IRRN.

The protein localises to the nucleus. This chain is B3 domain-containing protein Os03g0620400, found in Oryza sativa subsp. japonica (Rice).